A 691-amino-acid polypeptide reads, in one-letter code: Transcription termination factor Rho (691 aa).

The segment at 48–303 (ISDHQRGGSV…PEVDETELTE (256 aa)) is disordered. Residues 50 to 64 (DHQRGGSVADRDAAE) show a composition bias toward basic and acidic residues. 2 stretches are compositionally biased toward low complexity: residues 65-92 (RAAQ…PAAE) and 105-119 (DTSA…QPQA). Basic and acidic residues-rich tracts occupy residues 120–158 (EARE…SERR) and 188–273 (DADR…EGGR). The Rho RNA-BD domain occupies 307–390 (LQPVAGILDV…VKISSVNGQP (84 aa)). Residues 433 to 438 (GKGQRG), 445 to 450 (KAGKTM), and arginine 476 each bind ATP.

Belongs to the Rho family. As to quaternary structure, homohexamer. The homohexamer assembles into an open ring structure.

Its function is as follows. Facilitates transcription termination by a mechanism that involves Rho binding to the nascent RNA, activation of Rho's RNA-dependent ATPase activity, and release of the mRNA from the DNA template. In Micrococcus luteus (Micrococcus lysodeikticus), this protein is Transcription termination factor Rho.